Here is a 227-residue protein sequence, read N- to C-terminus: RNA-free ribonuclease P (227 aa).

The protein belongs to the HARP family.

It catalyses the reaction Endonucleolytic cleavage of RNA, removing 5'-extranucleotides from tRNA precursor.. Functionally, RNA-free RNase P that catalyzes the removal of the 5'-leader sequence from pre-tRNA to produce the mature 5'-terminus. The protein is RNA-free ribonuclease P of Archaeoglobus fulgidus (strain ATCC 49558 / DSM 4304 / JCM 9628 / NBRC 100126 / VC-16).